Reading from the N-terminus, the 372-residue chain is Glutamate 5-kinase (372 aa).

Lysine 9 provides a ligand contact to ATP. Positions 49, 136, and 148 each coordinate substrate. ATP is bound by residues 168–169 (TD) and 210–216 (TGGMKSK). The PUA domain maps to 276–353 (AGSIEIDSGA…EEALSLTKRS (78 aa)).

Belongs to the glutamate 5-kinase family.

It is found in the cytoplasm. The enzyme catalyses L-glutamate + ATP = L-glutamyl 5-phosphate + ADP. It functions in the pathway amino-acid biosynthesis; L-proline biosynthesis; L-glutamate 5-semialdehyde from L-glutamate: step 1/2. Functionally, catalyzes the transfer of a phosphate group to glutamate to form L-glutamate 5-phosphate. The chain is Glutamate 5-kinase from Shouchella clausii (strain KSM-K16) (Alkalihalobacillus clausii).